The following is a 1083-amino-acid chain: Kinesin-like protein KIN-14R (1083 aa).

Residues 264 to 418 (HDKYEKKIAE…NHIQETKGNI (155 aa)) adopt a coiled-coil conformation. The 323-residue stretch at 417–739 (NIRVFCRCRP…LNFATRVRGV (323 aa)) folds into the Kinesin motor domain. 500–507 (GQTGTGKT) serves as a coordination point for ATP. Coiled coils occupy residues 746-876 (KQVD…SEGS) and 905-947 (IKEL…MATT). The interval 967–1083 (EDNFGNENME…RDSKKKIWSR (117 aa)) is disordered. Over residues 971–985 (GNENMESNTNILRTS) the composition is skewed to polar residues. The segment covering 1020–1032 (PQMKEKRIRKSDP) has biased composition (basic and acidic residues). Residues 1044 to 1054 (RTASGSSSQVP) show a composition bias toward polar residues. The segment covering 1062 to 1083 (KREQQEVPVVKERDSKKKIWSR) has biased composition (basic and acidic residues).

It belongs to the TRAFAC class myosin-kinesin ATPase superfamily. Kinesin family. KIN-14 subfamily.

This chain is Kinesin-like protein KIN-14R, found in Arabidopsis thaliana (Mouse-ear cress).